Consider the following 393-residue polypeptide: MRGLGLMSGTSADGVDAAVLDLAVAGCGGYRGVFTHAFEPALRTEVLAANGPLGVEAMAQLDRRLGACYARVAREAVDRLGPVDFIALHGQTIRHQPRGEPGFTLQIGAAADIAVATGLTVVHDFRRTDVAAGGEGAPLVPPFHQYCFQDEQPRLVLNLGGMANVTWLPGTGDPRPLLAFDCGPGNVLMDAAVELCSAGQATCDVDGRLAAAGQCDVVRLEEWLDHVFFRQAPPKSTGRETFGMPLVTRWWSSWRGSAADFLATLTALTAESVARAVRAWTPGAAEMLVFGGGAENQALMQALQDAMKETRVLHGGRHSGIPGQALEALAFAWLGSQCLLGKRLDLERVTGAQHPMILGNILPGDNWPDLLVQLSQQPEITAREGPYRALRSV.

9-16 (GTSADGVD) contributes to the ATP binding site.

It belongs to the anhydro-N-acetylmuramic acid kinase family.

The enzyme catalyses 1,6-anhydro-N-acetyl-beta-muramate + ATP + H2O = N-acetyl-D-muramate 6-phosphate + ADP + H(+). It functions in the pathway amino-sugar metabolism; 1,6-anhydro-N-acetylmuramate degradation. Its pathway is cell wall biogenesis; peptidoglycan recycling. Catalyzes the specific phosphorylation of 1,6-anhydro-N-acetylmuramic acid (anhMurNAc) with the simultaneous cleavage of the 1,6-anhydro ring, generating MurNAc-6-P. Is required for the utilization of anhMurNAc either imported from the medium or derived from its own cell wall murein, and thus plays a role in cell wall recycling. This is Anhydro-N-acetylmuramic acid kinase from Acidithiobacillus ferrooxidans (strain ATCC 23270 / DSM 14882 / CIP 104768 / NCIMB 8455) (Ferrobacillus ferrooxidans (strain ATCC 23270)).